The sequence spans 261 residues: Cytochrome c oxidase subunit 3 (261 aa).

The Mitochondrial matrix portion of the chain corresponds to 1-15 (MTHQTHAYHMVNPSP). Residues 16-34 (WPLTGALSALLLTSGLMMW) traverse the membrane as a helical segment. The Mitochondrial intermembrane portion of the chain corresponds to 35–40 (FHFNNP). Residues 41-66 (TLLVLGLLTNLISSYQWWRDIVREGT) traverse the membrane as a helical segment. Over 67-72 (YQGHHT) the chain is Mitochondrial matrix. A helical transmembrane segment spans residues 73 to 105 (KVVQKGLRYGMVLFIISEVFFFLGFFWAFYHSS). The Mitochondrial intermembrane segment spans residues 106–128 (LAPTPELGGCWPPTGISPLNPLE). The chain crosses the membrane as a helical span at residues 129 to 152 (VPLLNTSILLASGVSITWSHHSLM). The Mitochondrial matrix segment spans residues 153–155 (EGN). Residues 156-183 (RKQMIQALMITIALGLYFTALQAMEYYE) form a helical membrane-spanning segment. At 184 to 190 (SSFTISD) the chain is on the mitochondrial intermembrane side. The helical transmembrane segment at 191 to 223 (GVYGSTFFVATGFHGLHVIIGTTFLITCLLRQL) threads the bilayer. Topologically, residues 224–232 (LYHFTSNHH) are mitochondrial matrix. The helical transmembrane segment at 233–256 (FGFEAAAWYWHFVDVVWLFLYVSI) threads the bilayer. Residues 257-261 (YWWGS) are Mitochondrial intermembrane-facing.

The protein belongs to the cytochrome c oxidase subunit 3 family. Component of the cytochrome c oxidase (complex IV, CIV), a multisubunit enzyme composed of 14 subunits. The complex is composed of a catalytic core of 3 subunits MT-CO1, MT-CO2 and MT-CO3, encoded in the mitochondrial DNA, and 11 supernumerary subunits COX4I, COX5A, COX5B, COX6A, COX6B, COX6C, COX7A, COX7B, COX7C, COX8 and NDUFA4, which are encoded in the nuclear genome. The complex exists as a monomer or a dimer and forms supercomplexes (SCs) in the inner mitochondrial membrane with NADH-ubiquinone oxidoreductase (complex I, CI) and ubiquinol-cytochrome c oxidoreductase (cytochrome b-c1 complex, complex III, CIII), resulting in different assemblies (supercomplex SCI(1)III(2)IV(1) and megacomplex MCI(2)III(2)IV(2)).

It is found in the mitochondrion inner membrane. It catalyses the reaction 4 Fe(II)-[cytochrome c] + O2 + 8 H(+)(in) = 4 Fe(III)-[cytochrome c] + 2 H2O + 4 H(+)(out). Component of the cytochrome c oxidase, the last enzyme in the mitochondrial electron transport chain which drives oxidative phosphorylation. The respiratory chain contains 3 multisubunit complexes succinate dehydrogenase (complex II, CII), ubiquinol-cytochrome c oxidoreductase (cytochrome b-c1 complex, complex III, CIII) and cytochrome c oxidase (complex IV, CIV), that cooperate to transfer electrons derived from NADH and succinate to molecular oxygen, creating an electrochemical gradient over the inner membrane that drives transmembrane transport and the ATP synthase. Cytochrome c oxidase is the component of the respiratory chain that catalyzes the reduction of oxygen to water. Electrons originating from reduced cytochrome c in the intermembrane space (IMS) are transferred via the dinuclear copper A center (CU(A)) of subunit 2 and heme A of subunit 1 to the active site in subunit 1, a binuclear center (BNC) formed by heme A3 and copper B (CU(B)). The BNC reduces molecular oxygen to 2 water molecules using 4 electrons from cytochrome c in the IMS and 4 protons from the mitochondrial matrix. The sequence is that of Cytochrome c oxidase subunit 3 (MT-CO3) from Tachyglossus aculeatus aculeatus (Southeast Australian short-beaked echidna).